A 382-amino-acid polypeptide reads, in one-letter code: Alcohol dehydrogenase 4 (382 aa).

NAD(+) contacts are provided by aspartate 40, asparagine 72, glycine 99, serine 100, threonine 139, threonine 140, threonine 148, phenylalanine 150, lysine 161, and glycine 183. Fe(2+) contacts are provided by aspartate 195, histidine 199, and histidine 264. Histidine 268 and histidine 278 together coordinate NAD(+). Fe(2+) is bound at residue histidine 278.

The protein belongs to the iron-containing alcohol dehydrogenase family. In terms of assembly, homodimer. Zn(2+) is required as a cofactor. Fe(2+) serves as cofactor.

The protein localises to the mitochondrion. The enzyme catalyses a primary alcohol + NAD(+) = an aldehyde + NADH + H(+). It catalyses the reaction ethanol + NAD(+) = acetaldehyde + NADH + H(+). Inhibited by EDTA. Its function is as follows. Alcohol dehydrogenase specific for ethanol. Acts mainyl as a mitochondrial formaldehyde dehydrogenase and has no effect on ethanol production. Shows drastically reduced activity towards primary alcohols from 4 carbon atoms upward. Isomers of aliphatic alcohol, as well as secondary alcohols and glycerol are not used at all. The role of ADH4 in yeast metabolism is not yet known, but ADH4 is not responsible for the production of ethanol during growth on glucose nor responsible for the oxidation of ethanol to acetaldehyde. The polypeptide is Alcohol dehydrogenase 4 (Saccharomyces cerevisiae (strain ATCC 204508 / S288c) (Baker's yeast)).